A 375-amino-acid chain; its full sequence is NADH-ubiquinone oxidoreductase 40 kDa subunit, mitochondrial (375 aa).

The N-terminal 26 residues, 1–26 (MAPLTAAMRSTPRIIVSNAFGFQRRA), are a transit peptide targeting the mitochondrion.

It belongs to the complex I NDUFA9 subunit family. Complex I is composed of about 40 different subunits. FAD serves as cofactor.

It localises to the mitochondrion matrix. Its function is as follows. Accessory subunit of the mitochondrial membrane respiratory chain NADH dehydrogenase (Complex I), that is believed not to be involved in catalysis. Complex I functions in the transfer of electrons from NADH to the respiratory chain. The immediate electron acceptor for the enzyme is believed to be ubiquinone. The chain is NADH-ubiquinone oxidoreductase 40 kDa subunit, mitochondrial (nuo40) from Neurospora crassa (strain ATCC 24698 / 74-OR23-1A / CBS 708.71 / DSM 1257 / FGSC 987).